The following is a 373-amino-acid chain: Phosphoserine aminotransferase (373 aa).

R46 contributes to the L-glutamate binding site. Residues F104, T150, D172, and Q195 each coordinate pyridoxal 5'-phosphate. K196 carries the N6-(pyridoxal phosphate)lysine modification. N247 to T248 is a pyridoxal 5'-phosphate binding site.

This sequence belongs to the class-V pyridoxal-phosphate-dependent aminotransferase family. SerC subfamily. In terms of assembly, homodimer. It depends on pyridoxal 5'-phosphate as a cofactor.

The protein resides in the cytoplasm. The catalysed reaction is O-phospho-L-serine + 2-oxoglutarate = 3-phosphooxypyruvate + L-glutamate. The enzyme catalyses 4-(phosphooxy)-L-threonine + 2-oxoglutarate = (R)-3-hydroxy-2-oxo-4-phosphooxybutanoate + L-glutamate. Its pathway is amino-acid biosynthesis; L-serine biosynthesis; L-serine from 3-phospho-D-glycerate: step 2/3. The protein operates within cofactor biosynthesis; pyridoxine 5'-phosphate biosynthesis; pyridoxine 5'-phosphate from D-erythrose 4-phosphate: step 3/5. In terms of biological role, catalyzes the reversible conversion of 3-phosphohydroxypyruvate to phosphoserine and of 3-hydroxy-2-oxo-4-phosphonooxybutanoate to phosphohydroxythreonine. The protein is Phosphoserine aminotransferase of Rhodococcus opacus (strain B4).